The primary structure comprises 145 residues: Large ribosomal subunit protein uL13 (145 aa).

The protein belongs to the universal ribosomal protein uL13 family. Part of the 50S ribosomal subunit.

Its function is as follows. This protein is one of the early assembly proteins of the 50S ribosomal subunit, although it is not seen to bind rRNA by itself. It is important during the early stages of 50S assembly. This Staphylococcus aureus (strain Mu3 / ATCC 700698) protein is Large ribosomal subunit protein uL13.